Reading from the N-terminus, the 170-residue chain is MAVLQVLHFPDERLRITAQPVKEVNADIQRIVDDMFDTMYEEEGIGLAATQVDIHQRIIVIDVSEERDQRLVLINPELIEKSGDTGIEEGCLSIPETRALVPRAEHVKVRALDREGKTFELEASELLAICIQHEMDHLVGKLFIDYLSPLKRQRIRQKLEKLAKQNSRAR.

Positions 91 and 133 each coordinate Fe cation. The active site involves Glu134. His137 is a binding site for Fe cation.

Belongs to the polypeptide deformylase family. Fe(2+) serves as cofactor.

It carries out the reaction N-terminal N-formyl-L-methionyl-[peptide] + H2O = N-terminal L-methionyl-[peptide] + formate. In terms of biological role, removes the formyl group from the N-terminal Met of newly synthesized proteins. Requires at least a dipeptide for an efficient rate of reaction. N-terminal L-methionine is a prerequisite for activity but the enzyme has broad specificity at other positions. This is Peptide deformylase from Pectobacterium carotovorum subsp. carotovorum (strain PC1).